Here is a 579-residue protein sequence, read N- to C-terminus: MSVTGFTITDEKVHLYHSIEKEKTVRHIGDLCSSHSVKKIQVGICLLLVELCERFTFFEVVCNMIPFCTIKLGYHNCQAAILNLCFIGTSILTPVFVRWLTDVYLGRNKLVYICLFLHFLGTALLSVVAFPLEDFYLGTYHAVNNIPKTEQHRLFYVALLTICLGIGGVRAIVCPLGAFGLQEYGSQKTMSFFNWFYWLMNLNATIVFLGISYIQHSQAWALVLLIPFMSMLMAVITLHMIYYNLIYQSEKRCSLLTGVGVLVSALKTCHPQYCHLGRDVTSQLDHAKEKNGGCYSELHVEDTTFFLTLLPLFIFQLLYRMCIMQIPSGYYLQTMNSNLNLDGFLLPIAVMNAISSLPLLILAPFLEYFSTCLFPSKRVGSFLSTCIIAGNLFAALSVMIAGFFEIHRKHFPAVEQPLSGKVLTVSSMPCFYLILQYVLLGVAETLVNPALSVISYRFVPSNVRGTSMNFLTLFNGFGCFTGALLVKLVYLISDGNWFPNTLNKGNLESFFFFLASLTLLNVLGFCSVSQRYCNLNHFNAQNIRGSNLEETLLLHEKSLKFYGSIQEFSSSIDLWETAL.

Helical transmembrane passes span 77 to 97, 110 to 130, 154 to 174, 191 to 211, 221 to 241, 304 to 324, 343 to 363, 386 to 406, 422 to 442, 472 to 492, and 509 to 529; these read CQAA…PVFV, LVYI…VVAF, LFYV…AIVC, SFFN…FLGI, ALVL…LHMI, TFFL…MCIM, GFLL…LILA, CIIA…FFEI, VLTV…LLGV, TLFN…VYLI, and SFFF…CSVS.

Belongs to the major facilitator superfamily. Proton-dependent oligopeptide transporter (POT/PTR) (TC 2.A.17) family.

Its subcellular location is the membrane. Functionally, proton oligopeptide cotransporter. The polypeptide is Solute carrier family 15 member 5 (SLC15A5) (Homo sapiens (Human)).